Here is a 509-residue protein sequence, read N- to C-terminus: GMP synthase [glutamine-hydrolyzing] (509 aa).

One can recognise a Glutamine amidotransferase type-1 domain in the interval 4–193; the sequence is NVLILDFGSQ…LIKIAGTKAT (190 aa). Cys79 acts as the Nucleophile in catalysis. Residues His167 and Glu169 contribute to the active site. The GMPS ATP-PPase domain occupies 194-384; that stretch reads WTPGKFVDLT…LGIDKELLGR (191 aa). 221-227 is a binding site for ATP; sequence SGGVDST.

Homodimer.

It catalyses the reaction XMP + L-glutamine + ATP + H2O = GMP + L-glutamate + AMP + diphosphate + 2 H(+). It functions in the pathway purine metabolism; GMP biosynthesis; GMP from XMP (L-Gln route): step 1/1. In terms of biological role, catalyzes the synthesis of GMP from XMP. The chain is GMP synthase [glutamine-hydrolyzing] from Christiangramia forsetii (strain DSM 17595 / CGMCC 1.15422 / KT0803) (Gramella forsetii).